Reading from the N-terminus, the 2843-residue chain is Adenomatous polyposis coli protein (2843 aa).

An N-acetylalanine modification is found at A2. A coiled-coil region spans residues 2–61 (AAASYDQLLKQVEALKMENSNLRQELEDNSNHLTKLETEASNMKEVLKQLQGSIEDEAMA). S107 and S111 each carry phosphoserine. The stretch at 127-248 (SRESTGYLEE…ATEAERSSQN (122 aa)) forms a coiled coil. Residues 239–305 (ATEAERSSQN…STHSAPRRLT (67 aa)) form a disordered region. Residues 241–261 (EAERSSQNKHETGSHDAERQN) are compositionally biased toward basic and acidic residues. Residues 271 to 282 (MATSGNGQGSTT) are compositionally biased toward polar residues. Low complexity predominate over residues 290 to 299 (SVLSSSSTHS). ARM repeat units lie at residues 453–495 (LMKL…HYSI), 505–547 (LTNL…IASV), 548–591 (LRNL…VLSA), 592–638 (LWNL…GGGI), 639–683 (LRNV…ACGT), 684–725 (LWNL…SAAA), and 726–767 (LRNL…LDAQ). S744, S748, and S780 each carry phosphoserine. Positions 828–878 (TTVLPSSSSSRGSLDSSRSEKDRSLERERGIGLGNYHPATENPGTSSKRGL) are disordered. Residues 833–843 (SSSSSRGSLDS) show a composition bias toward low complexity. Residues 844 to 857 (SRSEKDRSLERERG) are compositionally biased toward basic and acidic residues. Polar residues predominate over residues 869-878 (NPGTSSKRGL). S908 is subject to Phosphoserine. Disordered stretches follow at residues 923-943 (RRSSAAHTHSNTYNFTKSENS) and 958-987 (RSSNDSLNSVSSSDGYGKRGQMKPSIESYS). The segment covering 927-943 (AAHTHSNTYNFTKSENS) has biased composition (polar residues). The segment at 960–1337 (SNDSLNSVSS…QHPRTKSSRL (378 aa)) is responsible for down-regulation through a process mediated by direct ubiquitination. Low complexity predominate over residues 961-971 (NDSLNSVSSSD). A phosphoserine mark is found at S987, S1038, and S1042. The tract at residues 1020–1169 (ELDTPINYSL…TNYSIKYNEE (150 aa)) is interaction with catenins. Disordered regions lie at residues 1099–1169 (VSPY…YNEE), 1190–1244 (SQKQ…GQPQ), and 1311–1376 (IGTR…PEHY). Residues 1107–1130 (ANGSETNRVGSNHGINQNVSQSLC) show a composition bias toward polar residues. Basic and acidic residues predominate over residues 1146-1159 (RYSEEEQHEEEERP). Low complexity predominate over residues 1190–1224 (SQKQSFSFSKSSSGQSSKTEHMSSSSENTSTPSSN). Positions 1225-1244 (AKRQNQLHPSSAQSRSGQPQ) are enriched in polar residues. Low complexity-rich tracts occupy residues 1335–1345 (SRLQGSSLSSE) and 1355–1366 (SSGAKSPSKSGA). A phosphoserine mark is found at S1360, S1371, S1385, S1392, and S1395. Disordered stretches follow at residues 1403–1475 (SSVQ…VNAA), 1526–1569 (PPVQ…DSDD), 1583–1611 (MPTKSSRKAKKPAQTASKLPPPVARKPSQ), 1664–1717 (SPPN…DDNK), and 1729–1836 (NSAM…RVRG). The residue at position 1438 (T1438) is a Phosphothreonine. Composition is skewed to basic and acidic residues over residues 1448–1466 (TKREVPKNKAPTAEKRESG) and 1540–1564 (EQPKESNENQEKEAEKTIDSEKDLL). S1567 is subject to Phosphoserine. Positions 1683–1698 (EFEKRDTIPTEGRSTD) are enriched in basic and acidic residues. A compositionally biased stretch (basic residues) spans 1735 to 1744 (GKSHKPFRVK). S1774 bears the Phosphoserine mark. Basic and acidic residues-rich tracts occupy residues 1785 to 1794 (YRTRVRKNAD) and 1804 to 1813 (VFSDNKDSKK). Phosphoserine is present on residues S1861, S1863, and S1864. Residues 1866–1893 (DFDDDDVDLSREKAELRKAKENKESEAK) are highly charged. Positions 1881–1896 (LRKAKENKESEAKVTS) are enriched in basic and acidic residues. Disordered stretches follow at residues 1881-1950 (LRKA…TDEK), 1965-2011 (HNSS…APKS), and 2043-2072 (ISSAMPKKKKPSRLKGDNEKHSPRNMGGIL). Polar residues-rich tracts occupy residues 1897–1913 (HTELTSNQQSANKTQAI) and 1928–1938 (QKQSTFPQSSK). Basic and acidic residues predominate over residues 1939–1950 (DIPDRGAATDEK). S1971 and S1973 each carry phosphoserine. Residues 1979–1991 (NNNKENEPIKETE) are compositionally biased toward basic and acidic residues. The interaction with AXIN1 stretch occupies residues 2035 to 2059 (EDDLLQECISSAMPKKKKPSRLKGD). A phosphoserine mark is found at S2088, S2093, S2125, S2129, S2130, and S2132. Disordered regions lie at residues 2147-2635 (PFHL…SGAT) and 2667-2714 (NNPR…VPMR). T2151 is subject to Phosphothreonine. The interval 2167-2674 (ILKPGEKSTL…PINNPRSGRS (508 aa)) is basic region. Residues 2169 to 2187 (KPGEKSTLETKKIESESKG) are compositionally biased toward basic and acidic residues. 2 stretches are compositionally biased toward polar residues: residues 2203–2223 (VRSNSEISGQMKQPLQANMPS) and 2257–2271 (ASKSPSEGQTATTSP). Phosphoserine is present on residues S2260, S2270, and S2283. A compositionally biased stretch (polar residues) spans 2286-2331 (ARQTSQIGGSSKAPSRSGSRDSTPSRPAQQPLSRPIQSPGRNSISP). The segment covering 2348-2369 (TSSPSTASTKSSGSGKMSYTSP) has biased composition (low complexity). 2 stretches are compositionally biased toward polar residues: residues 2370 to 2409 (GRQMSQQNLTKQTGLSKNASSIPRSESASKGLNQMNNGNG) and 2418 to 2427 (RMSSTKSSGS). The segment covering 2459–2477 (SASFESLSPSSRPASPTRS) has biased composition (low complexity). Phosphoserine occurs at positions 2473 and 2535. Positions 2475 to 2843 (TRSQAQTPVL…HSGSYLVTSV (369 aa)) are interaction with DLG1. Basic and acidic residues predominate over residues 2518-2535 (NDGRPAKRHDIARSHSES). A compositionally biased stretch (polar residues) spans 2555–2568 (SSSLPRVSTWRRTG). At S2569 the chain carries Phosphoserine. Positions 2569–2579 (SSSSILSASSE) are enriched in low complexity. Residues 2580 to 2592 (SSEKAKSEDEKHV) show a composition bias toward basic and acidic residues. 3 stretches are compositionally biased toward polar residues: residues 2593-2608 (NSISGTKQSKENQVSA), 2620-2635 (FSPTNSTSQTVSSGAT), and 2668-2679 (NPRSGRSPTGNT). A phosphoserine mark is found at S2671 and S2674. The interval 2674–2843 (SPTGNTPPVI…HSGSYLVTSV (170 aa)) is interaction with MAPRE1. T2679 carries the phosphothreonine modification. A phosphoserine mark is found at S2710 and S2724. The tract at residues 2729 to 2843 (DAPDQKGTEI…HSGSYLVTSV (115 aa)) is disordered. Polar residues predominate over residues 2741–2757 (GQNNPVPVSETNESSIV). Residues 2763 to 2774 (SSSSSSKHSSPS) show a composition bias toward low complexity. Residues 2784–2812 (FNYNPSPRKSSADSTSARPSQIPTPVNNN) are compositionally biased toward polar residues. At S2789 the chain carries Phosphoserine. Residues 2803-2806 (SQIP) carry the Microtubule tip localization signal motif. Residues 2841 to 2843 (TSV) carry the PDZ-binding motif.

It belongs to the adenomatous polyposis coli (APC) family. As to quaternary structure, forms homooligomers. Found in a complex consisting of ARHGEF4, APC and CTNNB1. Found in a complex composed of MACF1, APC, AXIN1, CTNNB1 and GSK3B. The complex composed, at least, of APC, CTNNB1 and GSK3B interacts with JPT1; the interaction requires the inactive form of GSK3B (phosphorylated at 'Ser-9'). Interacts with APC2. Interacts with DLG1 (via PDZ domains) and DLG3 (via PDZ domains). Interacts with alpha- and beta-catenins. Interacts with AXIN1 (via RGS domain). Interacts with ARHGEF4 (via N-terminus). Interacts (via C-terminal residues 2674-2843) with MAPRE1 (via C-terminal residues 206-211); the interaction inhibits association with and bundling of F-actin. Interacts with MAPRE2 and MAPRE3 (via C-terminus). Interacts with DIAPH1; DIAPH1 acts as a scaffold protein for MAPRE1 and APC to stabilize microtubules and promote cell migration. Interacts with DIAPH2. Interacts with SCRIB; may mediate APC targeting to adherens junctions of epithelial cells. Interacts with SPATA13 (via N-terminus and SH3 domain). Interacts with ASAP1 (via SH3 domain). Interacts (at the cell membrane) with AMER1 and AMER2 (via ARM repeats). Interacts with KHDRBS1. Interacts with actin; binds both to F-actin and actin filament bundles. Post-translationally, phosphorylated; phosphorylation enhances the F-actin bundling activity. Phosphorylated by GSK3B. In terms of processing, ubiquitinated, leading to its degradation by the proteasome. Ubiquitination is facilitated by Axin. Deubiquitinated by ZRANB1/TRABID. Expressed in a variety of tissues: brain, small intestine, colon, thymus, skeletal muscle, heart, prostate, lung, spleen, ovary, testis kidney, placenta, blood and liver. Isoform 1A: Very strongly expressed in brain but has relatively low expression levels in other tissues. Isoform 1B: Predominant form in all tissues except for brain, including gastric mucosa and blood.

Its subcellular location is the cell junction. It is found in the adherens junction. The protein resides in the cytoplasm. The protein localises to the cytoskeleton. It localises to the cell projection. Its subcellular location is the lamellipodium. It is found in the ruffle membrane. The protein resides in the cell membrane. Functionally, tumor suppressor. Promotes rapid degradation of CTNNB1 and participates in Wnt signaling as a negative regulator. APC activity is correlated with its phosphorylation state. Activates the GEF activity of SPATA13 and ARHGEF4. Plays a role in hepatocyte growth factor (HGF)-induced cell migration. Required for MMP9 up-regulation via the JNK signaling pathway in colorectal tumor cells. Associates with both microtubules and actin filaments, components of the cytoskeleton. Plays a role in mediating the organization of F-actin into ordered bundles. Functions downstream of Rho GTPases and DIAPH1 to selectively stabilize microtubules. Acts as a mediator of ERBB2-dependent stabilization of microtubules at the cell cortex. It is required for the localization of MACF1 to the cell membrane and this localization of MACF1 is critical for its function in microtubule stabilization. The chain is Adenomatous polyposis coli protein from Homo sapiens (Human).